A 954-amino-acid polypeptide reads, in one-letter code: Alpha-xylosidase BoGH31A (954 aa).

A signal peptide spans 1–20 (MIMNMKNIFYCLLPGLLLGA). Residue Cys21 is the site of N-palmitoyl cysteine attachment. Cys21 is lipidated: S-diacylglycerol cysteine. A PA14 domain is found at 227–366 (TGQEGALTGT…NPEEQGKQSW (140 aa)). Active-site residues include Asp553 and Glu556. Asp630 (proton donor) is an active-site residue.

It belongs to the glycosyl hydrolase 31 family.

It is found in the cell inner membrane. The enzyme catalyses Hydrolysis of terminal, non-reducing alpha-D-xylose residues with release of alpha-D-xylose.. The protein operates within glucan metabolism; xyloglucan degradation. Catalyzes the liberation of alpha-xylose from the non-reducing terminal glucose of xyloglucan oligosaccharides in xyloglucan degradation, converting the 'X' to 'G' units. This Bacteroides ovatus (strain ATCC 8483 / DSM 1896 / JCM 5824 / BCRC 10623 / CCUG 4943 / NCTC 11153) protein is Alpha-xylosidase BoGH31A.